An 82-amino-acid polypeptide reads, in one-letter code: ATP synthase subunit c, chloroplastic (82 aa).

Helical transmembrane passes span 3–23 (PIISAASVIAAGLAVGLAAIG) and 57–77 (LAFMESLTIYGLVVALSLLFA).

This sequence belongs to the ATPase C chain family. F-type ATPases have 2 components, F(1) - the catalytic core - and F(0) - the membrane proton channel. F(1) has five subunits: alpha(3), beta(3), gamma(1), delta(1), epsilon(1). F(0) has four main subunits: a(1), b(1), b'(1) and c(10-14). The alpha and beta chains form an alternating ring which encloses part of the gamma chain. F(1) is attached to F(0) by a central stalk formed by the gamma and epsilon chains, while a peripheral stalk is formed by the delta, b and b' chains.

Its subcellular location is the plastid. The protein resides in the chloroplast thylakoid membrane. Its function is as follows. F(1)F(0) ATP synthase produces ATP from ADP in the presence of a proton or sodium gradient. F-type ATPases consist of two structural domains, F(1) containing the extramembraneous catalytic core and F(0) containing the membrane proton channel, linked together by a central stalk and a peripheral stalk. During catalysis, ATP synthesis in the catalytic domain of F(1) is coupled via a rotary mechanism of the central stalk subunits to proton translocation. Key component of the F(0) channel; it plays a direct role in translocation across the membrane. A homomeric c-ring of between 10-14 subunits forms the central stalk rotor element with the F(1) delta and epsilon subunits. In Cyanidium caldarium (Red alga), this protein is ATP synthase subunit c, chloroplastic.